Consider the following 207-residue polypeptide: MVADNSEKSTKSVANGSLISTVSSKDDLPNAIIVTQVPEDVFDNKQDKANFSSLFTQIEKDIHFDFLRSFRRVRVIFSSPENATAAKLIVQGFSFKGHELKAFFAQRIYMSANSQMLSPPPLEKQFLISPPCSPPVGWEQTKDMPPVVCNFDLMARLASFAIDEKYEVHNGDELTPAIIVHPCETPIDVPSAIEMPRTPRPSSPCEQ.

The required for tax-6 interaction stretch occupies residues 176–181 (PAIIVH).

This sequence belongs to the RCAN family. As to quaternary structure, interacts with tax-6 (via catalytic domain); the interaction is calcium-dependent. Expressed in lateral hypodermal cells, marginal cells of the pharynx, vulva epithelial cells, ventral and dorsal nerve cords and commissures and various neurons in the anterior and posterior regions. Expressed in male tail structures including the diagonal muscles, sensory rays and spicules. Expressed in PHC neurons and most tail neurons and support cells of the phasmid neurons. Also expressed in pharyngeal muscle, head neurons, excretory canal cells and hypodermal seam cells.

Inhibits tax-6/calcineurin A phosphatase activity and thereby negatively regulates calcineurin-mediated functions. Plays a role in modulating temperature-dependent calcium responses in AFD neurons and in addition, also negatively regulates thermotaxis in a tax-6-dependent manner in AFD neurons. In response to changes in intracellular calcium levels may also regulate nuclear translocation of transcriptional regulators such as crtc-1. May play a role in regulating body size. Plays a role in male tail tip morphogenesis. The sequence is that of Calcipressin-like protein from Caenorhabditis elegans.